A 138-amino-acid polypeptide reads, in one-letter code: ATP synthase epsilon chain (138 aa).

It belongs to the ATPase epsilon chain family. In terms of assembly, F-type ATPases have 2 components, CF(1) - the catalytic core - and CF(0) - the membrane proton channel. CF(1) has five subunits: alpha(3), beta(3), gamma(1), delta(1), epsilon(1). CF(0) has three main subunits: a, b and c.

It localises to the cellular thylakoid membrane. Functionally, produces ATP from ADP in the presence of a proton gradient across the membrane. This chain is ATP synthase epsilon chain, found in Cyanothece sp. (strain PCC 7425 / ATCC 29141).